The chain runs to 103 residues: Histone H4 (103 aa).

The segment covering 1-14 has biased composition (gly residues); that stretch reads MSGRGKGGKGLGKG. Residues 1 to 20 form a disordered region; the sequence is MSGRGKGGKGLGKGGAKRHR. Serine 2 bears the N-acetylserine mark. Lysine 17 carries the post-translational modification N6-acetyllysine. The DNA-binding element occupies 17–21; the sequence is KRHRR. Residue lysine 80 is modified to N6-methylated lysine.

Belongs to the histone H4 family. The nucleosome is a histone octamer containing two molecules each of H2A, H2B, H3 and H4 assembled in one H3-H4 heterotetramer and two H2A-H2B heterodimers. The octamer wraps approximately 147 bp of DNA.

Its subcellular location is the nucleus. The protein localises to the chromosome. Its function is as follows. Core component of nucleosome. Nucleosomes wrap and compact DNA into chromatin, limiting DNA accessibility to the cellular machineries which require DNA as a template. Histones thereby play a central role in transcription regulation, DNA repair, DNA replication and chromosomal stability. DNA accessibility is regulated via a complex set of post-translational modifications of histones, also called histone code, and nucleosome remodeling. This Olisthodiscus luteus (Marine phytoflagellate) protein is Histone H4.